Consider the following 250-residue polypeptide: ATP synthase subunit a (250 aa).

The next 6 membrane-spanning stretches (helical) occupy residues 26 to 46 (FTNA…FLYF), 84 to 104 (FFPL…LGMF), 114 to 134 (IIVT…YGFY), 143 to 163 (VFVP…IEII), 193 to 213 (FVAS…LPLI), and 216 to 236 (VALT…FAVL).

It belongs to the ATPase A chain family. F-type ATPases have 2 components, CF(1) - the catalytic core - and CF(0) - the membrane proton channel. CF(1) has five subunits: alpha(3), beta(3), gamma(1), delta(1), epsilon(1). CF(0) has three main subunits: a(1), b(2) and c(9-12). The alpha and beta chains form an alternating ring which encloses part of the gamma chain. CF(1) is attached to CF(0) by a central stalk formed by the gamma and epsilon chains, while a peripheral stalk is formed by the delta and b chains.

The protein resides in the cell inner membrane. Key component of the proton channel; it plays a direct role in the translocation of protons across the membrane. The chain is ATP synthase subunit a from Rhizobium etli (strain ATCC 51251 / DSM 11541 / JCM 21823 / NBRC 15573 / CFN 42).